The primary structure comprises 735 residues: ATP-dependent DNA helicase Hel308 (735 aa).

ATP contacts are provided by residues glutamine 32 and 50-57 (APTGSGKT). Residues 37–201 (QAGVEKGENL…WIGGKIVESS (165 aa)) enclose the Helicase ATP-binding domain. A DEAH box motif is present at residues 146-149 (DEIH). In terms of domain architecture, Helicase C-terminal spans 235–431 (DLDLAAEAIE…GLRGLRHFIL (197 aa)).

It belongs to the helicase family. Hel308 subfamily. As to quaternary structure, monomer.

The catalysed reaction is Couples ATP hydrolysis with the unwinding of duplex DNA by translocating in the 3'-5' direction.. It carries out the reaction ATP + H2O = ADP + phosphate + H(+). Its function is as follows. DNA-dependent ATPase and 3'-5' DNA helicase that may be involved in repair of stalled replication forks. The polypeptide is ATP-dependent DNA helicase Hel308 (Aeropyrum pernix (strain ATCC 700893 / DSM 11879 / JCM 9820 / NBRC 100138 / K1)).